Reading from the N-terminus, the 680-residue chain is MSAYAALQKMSGASSILYGINGESDNDESGTIGYLRNSSDEEVEAEEAEVPTTSTMAPTPNIIRTPSIVPKINSFICESNFIPNDDNFIVFHDHIIIGLKANEYILINGQSKMTIQRGAILINTGHYMFAHPNNCIPIIASQSQSLPIISSTQVVDRSGIKDSKTDENMHLFSSNYKSIIKLENLYTGLEKIGTYHPPFKRLFYSHAVIEDEDLTEYERLFKTYSFEIILRDRGCIGISIEKLWLNQIQLLISDIHEDLIPKTIMIIGNKNSGKSTLSKTLLNSLILANQNTVSYLDLDPGQSEFSMPYCLSLTNHSKPIIGMNVPKVSGDEDSVSHYYGFTTPQSQPSQYVSIIKALFREYDQVYRPRGHHLIINTPGWIKGYGKELLNELTAFINPNQLILLSNNTDNDNMDNSDNLSGLTFQNSRCFQGIYQTSKYSPFQLRMYNKLSYFHQVDTLKFDFNSHILLRSPLKLSYETVNSSKDFKGINMVSVLNYDTGLNFELNDLLSMIDTSIMGLYLIDHEYYSSLKASLKKSEDCDYLPQYLNSTDYVNLINYSSSNNIFMGLCMVHSINTKDEFFNIYLPGHNQHRLTEMITKRDYKMLLVKGDGDIPSPDLLMFDMLLKQQEDLKRLNKKRKKNPNVDDKDVLKIPYVTFENKNKIGGIWKTRRNVMRRSHQR.

The segment at 38-61 (SSDEEVEAEEAEVPTTSTMAPTPN) is disordered. Over residues 40–49 (DEEVEAEEAE) the composition is skewed to acidic residues. Residues 51-61 (PTTSTMAPTPN) show a composition bias toward polar residues. 268 to 275 (GNKNSGKS) contacts ATP.

It belongs to the Clp1 family. NOL9/GRC3 subfamily.

It localises to the nucleus. The protein resides in the nucleolus. Its function is as follows. Polynucleotide 5'-kinase involved in rRNA processing. This is Polynucleotide 5'-hydroxyl-kinase GRC3 (GRC3) from Debaryomyces hansenii (strain ATCC 36239 / CBS 767 / BCRC 21394 / JCM 1990 / NBRC 0083 / IGC 2968) (Yeast).